Reading from the N-terminus, the 308-residue chain is Pantothenate kinase (308 aa).

ATP is bound at residue Gly93–Ser100.

Belongs to the prokaryotic pantothenate kinase family.

It is found in the cytoplasm. The enzyme catalyses (R)-pantothenate + ATP = (R)-4'-phosphopantothenate + ADP + H(+). The protein operates within cofactor biosynthesis; coenzyme A biosynthesis; CoA from (R)-pantothenate: step 1/5. The chain is Pantothenate kinase from Corynebacterium aurimucosum (strain ATCC 700975 / DSM 44827 / CIP 107346 / CN-1) (Corynebacterium nigricans).